The following is a 470-amino-acid chain: Neuraminidase (470 aa).

The Intravirion segment spans residues 1–6; sequence MNPNQK. A helical transmembrane segment spans residues 7 to 27; the sequence is IITIGSICMAIGTISLILQIG. Residues 11–33 form an involved in apical transport and lipid raft association region; it reads GSICMAIGTISLILQIGNIISIW. Residues 28–470 are Virion surface-facing; sequence NIISIWVSHS…GAELPFTIDK (443 aa). The tract at residues 36–90 is hypervariable stalk region; the sequence is HSIQTGSQNHTGICNQRIITYENNTWVNQTYVNISNTNVVAGKDTTSMILAGNSS. 5 N-linked (GlcNAc...) asparagine; by host glycosylation sites follow: asparagine 44, asparagine 58, asparagine 63, asparagine 68, and asparagine 88. The head of neuraminidase stretch occupies residues 91–470; sequence LCPIRGWAIY…GAELPFTIDK (380 aa). Disulfide bonds link cysteine 92-cysteine 417, cysteine 124-cysteine 129, cysteine 184-cysteine 231, cysteine 233-cysteine 238, cysteine 279-cysteine 292, cysteine 281-cysteine 290, cysteine 318-cysteine 335, and cysteine 421-cysteine 447. Arginine 118 provides a ligand contact to substrate. A glycan (N-linked (GlcNAc...) asparagine; by host) is linked at asparagine 146. Aspartate 151 serves as the catalytic Proton donor/acceptor. Residue arginine 152 coordinates substrate. N-linked (GlcNAc...) asparagine; by host glycosylation is present at asparagine 235. Position 277 to 278 (277 to 278) interacts with substrate; the sequence is EE. Substrate is bound at residue arginine 293. Residues aspartate 294, glycine 298, and aspartate 324 each coordinate Ca(2+). N-linked (GlcNAc...) asparagine; by host glycosylation is present at asparagine 365. Arginine 368 is a substrate binding site. Tyrosine 402 acts as the Nucleophile in catalysis. An N-linked (GlcNAc...) asparagine; by host glycan is attached at asparagine 455.

This sequence belongs to the glycosyl hydrolase 34 family. As to quaternary structure, homotetramer. It depends on Ca(2+) as a cofactor. N-glycosylated.

The protein resides in the virion membrane. It is found in the host apical cell membrane. It catalyses the reaction Hydrolysis of alpha-(2-&gt;3)-, alpha-(2-&gt;6)-, alpha-(2-&gt;8)- glycosidic linkages of terminal sialic acid residues in oligosaccharides, glycoproteins, glycolipids, colominic acid and synthetic substrates.. Its activity is regulated as follows. Inhibited by the neuraminidase inhibitors zanamivir (Relenza) and oseltamivir (Tamiflu). These drugs interfere with the release of progeny virus from infected cells and are effective against all influenza strains. Resistance to neuraminidase inhibitors is quite rare. Its function is as follows. Catalyzes the removal of terminal sialic acid residues from viral and cellular glycoconjugates. Cleaves off the terminal sialic acids on the glycosylated HA during virus budding to facilitate virus release. Additionally helps virus spread through the circulation by further removing sialic acids from the cell surface. These cleavages prevent self-aggregation and ensure the efficient spread of the progeny virus from cell to cell. Otherwise, infection would be limited to one round of replication. Described as a receptor-destroying enzyme because it cleaves a terminal sialic acid from the cellular receptors. May facilitate viral invasion of the upper airways by cleaving the sialic acid moieties on the mucin of the airway epithelial cells. Likely to plays a role in the budding process through its association with lipid rafts during intracellular transport. May additionally display a raft-association independent effect on budding. Plays a role in the determination of host range restriction on replication and virulence. Sialidase activity in late endosome/lysosome traffic seems to enhance virus replication. This is Neuraminidase from Influenza A virus (strain A/USA:Albany/12/1951 H1N1).